A 1099-amino-acid chain; its full sequence is Solute carrier family 12 member 1 (1099 aa).

Residues 1–177 lie on the Cytoplasmic side of the membrane; it reads MSLNNSSNVF…EDDQAGVVKF (177 aa). Residues 20 to 23 carry the RFXV motif motif; it reads RFQV. The segment at 31–53 is disordered; it reads ESSAAADDNTDPPHYEETSFGDE. Ser-61 carries the phosphoserine modification. Ser-91 is subject to Phosphoserine; by OXSR1 and STK39. At Thr-95 the chain carries Phosphothreonine. Thr-100 and Thr-105 each carry phosphothreonine; by OXSR1 and STK39. A Phosphothreonine modification is found at Thr-118. A Phosphoserine modification is found at Ser-120. Position 130 is a phosphoserine; by AMPK (Ser-130). The residue at position 148 (Ser-148) is a Phosphoserine. The chain crosses the membrane as a helical span at residues 178-198; it reads GWVKGVLVRCMLNIWGVMLFI. The Extracellular portion of the chain corresponds to 199 to 201; the sequence is RLS. The helical transmembrane segment at 202–222 threads the bilayer; it reads WIVGEAGIGLGVLIILLSTMV. At 223–259 the chain is on the cytoplasmic side; that stretch reads TSITGLSTSAIATNGFVRGGGAYYLISRSLGPEFGGS. The helical transmembrane segment at 260-280 threads the bilayer; that stretch reads IGLIFAFANAVAVAMYVVGFA. Residues 281–302 lie on the Extracellular side of the membrane; that stretch reads ETVVDLLKESDSMMVDPTNDIR. Residues 303–323 form a helical membrane-spanning segment; that stretch reads IIGSITVVILLGISVAGMEWE. Over 324 to 327 the chain is Cytoplasmic; the sequence is AKAQ. Residues 328 to 348 form a helical membrane-spanning segment; that stretch reads VILLVILLIAIANFFIGTVIP. At 349–379 the chain is on the extracellular side; the sequence is SNNEKKSRGFFNYQASIFAENFGPRFTKGEG. A helical transmembrane segment spans residues 380–400; it reads FFSVFAIFFPAATGILAGANI. The Cytoplasmic segment spans residues 401-417; sequence SGDLEDPQDAIPRGTML. A helical transmembrane segment spans residues 418-438; sequence AIFITTVAYLGVAICVGACVV. Residues 439–550 are Extracellular-facing; sequence RDATGNMNDT…NNEPLRGYIL (112 aa). N-linked (GlcNAc...) asparagine glycosylation is found at Asn-446 and Asn-456. Transmembrane regions (helical) follow at residues 551 to 571 and 572 to 592; these read TFLI…APII and SNFF…ASYA. The Extracellular portion of the chain corresponds to 593–609; the sequence is KSPGWRPAYGIYNMWVS. The chain crosses the membrane as a helical span at residues 610 to 630; sequence LFGAVLCCAVMFVINWWAAVI. Topologically, residues 631-1099 are cytoplasmic; sequence TYVIEFFLYV…NHKNVLTFYS (469 aa).

The protein belongs to the SLC12A transporter family. In terms of assembly, when phosphorylated, interacts with PPP3CB. Post-translationally, phosphorylated at Ser-91, Thr-100 and Thr-105 by OXSR1/OSR1 and STK39/SPAK downstream of WNK kinases (WNK1, WNK2, WNK3 or WNK4), promoting its activity. In terms of tissue distribution, kidney; localizes to the thick ascending limbs (at protein level).

The protein localises to the apical cell membrane. The catalysed reaction is K(+)(out) + 2 chloride(out) + Na(+)(out) = K(+)(in) + 2 chloride(in) + Na(+)(in). With respect to regulation, activated following phosphorylation by OXSR1/OSR1 and STK39/SPAK downstream of WNK kinases (WNK1, WNK2, WNK3 or WNK4). In terms of biological role, renal sodium, potassium and chloride ion cotransporter that mediates the transepithelial NaCl reabsorption in the thick ascending limb and plays an essential role in the urinary concentration and volume regulation. Electrically silent transporter system. This is Solute carrier family 12 member 1 (SLC12A1) from Homo sapiens (Human).